Reading from the N-terminus, the 159-residue chain is Ribosomal RNA large subunit methyltransferase H (159 aa).

S-adenosyl-L-methionine-binding positions include Leu-76, Gly-108, and 127 to 132; that span reads FGRLTL.

The protein belongs to the RNA methyltransferase RlmH family. Homodimer.

The protein resides in the cytoplasm. It catalyses the reaction pseudouridine(1915) in 23S rRNA + S-adenosyl-L-methionine = N(3)-methylpseudouridine(1915) in 23S rRNA + S-adenosyl-L-homocysteine + H(+). In terms of biological role, specifically methylates the pseudouridine at position 1915 (m3Psi1915) in 23S rRNA. This chain is Ribosomal RNA large subunit methyltransferase H, found in Streptococcus pneumoniae (strain 70585).